The sequence spans 575 residues: Transcription factor COE2 (575 aa).

An interaction with DNA region spans residues 62–65 (RKSN). A C5-type zinc finger spans residues 150-169 (CRVLLTHEVMCSRCCEKKSC). Interaction with DNA stretches follow at residues 196 to 203 (NCLKTAGN) and 235 to 238 (NNSK). Positions 253–336 (PCIKAISPSE…KGAPGRFIYT (84 aa)) constitute an IPT/TIG domain. The span at 441 to 453 (STQGNNQGYIRNT) shows a compositional bias: polar residues. A disordered region spans residues 441–479 (STQGNNQGYIRNTSSISPRGYSSSSTPQQSNYSTSSNSM). Residues 454–479 (SSISPRGYSSSSTPQQSNYSTSSNSM) are compositionally biased toward low complexity.

Belongs to the COE family. Forms either a homodimer or a heterodimer with a related family member. Interacts with SIX1.

It localises to the nucleus. Its function is as follows. Transcription factor that, in osteoblasts, activates the decoy receptor for RANKL, TNFRSF11B, which in turn regulates osteoclast differentiation. Acts in synergy with the Wnt-responsive LEF1/CTNNB1 pathway. Recognizes variations of the palindromic sequence 5'-ATTCCCNNGGGAATT-3'. The polypeptide is Transcription factor COE2 (EBF2) (Homo sapiens (Human)).